The sequence spans 364 residues: MGSAKSAMLILLVAMVIASCATAIDMSVVSYDDNNRLHSVFDAEASLIFESWMVKHGKVYGSVAEKERRLTIFEDNLRFINNRNAENLSYRLGLTGFADLSLHEYKEVCHGADPRPPRNHVFMTSSDRYKTSADDVLPKSVDWRNEGAVTEVKDQGHCRSCWAFSTVGAVEGLNKIVTGELVTLSEQDLINCNKENNGCGGGKLETAYEFIMKNGGLGTDNDYPYKAVNGVCDGRLKENNKNVMIDGYENLPANDESALMKAVAHQPVTAVIDSSSREFQLYESGVFDGSCGTNLNHGVVVVGYGTENGRDYWLVKNSRGITWGEAGYMKMARNIANPRGLCGIAMRASYPLKNSFSTDKSSIA.

An N-terminal signal peptide occupies residues 1 to 23 (MGSAKSAMLILLVAMVIASCATA). The propeptide at 24-136 (IDMSVVSYDD…DRYKTSADDV (113 aa)) is activation peptide. N87 carries N-linked (GlcNAc...) asparagine glycosylation. Intrachain disulfides connect C158–C199, C192–C232, and C291–C342. The active site involves C161. Residues H297 and N317 contribute to the active site.

It belongs to the peptidase C1 family. In terms of tissue distribution, expressed in inflorescences.

Probable thiol protease. In Arabidopsis thaliana (Mouse-ear cress), this protein is Probable cysteine protease RDL4.